We begin with the raw amino-acid sequence, 975 residues long: DNA primase (975 aa).

A CHC2-type zinc finger spans residues 919–958; sequence CIQHDHRDGRENVQFFLDFRPESATTIWTTLWSRCFSRKC.

Belongs to the herpesviridae DNA primase family. In terms of assembly, associates with the helicase and the primase-associated factor to form the helicase-primase factor.

Its subcellular location is the host nucleus. In terms of biological role, essential component of the helicase/primase complex. Unwinds the DNA at the replication forks and generates single-stranded DNA for both leading and lagging strand synthesis. The primase initiates primer synthesis and thereby produces large amount of short RNA primers on the lagging strand that the polymerase elongates using dNTPs. This chain is DNA primase, found in Elephas maximus (Indian elephant).